The chain runs to 231 residues: MATPAQLGLQNATSPIMEELIAFHDHALMIIFLISSLVLYIISLMLTTKLTHTSTMNAQEIEMIWTILPAIILIMIALPSLRILYMTDEFNKPYLTLKAIGHQWYWSYEYSDYEDLAFDSYITPTYFLEPGEFRLLEVDNRTTLPMEADIRMLITSQDVLHSWAVPSLGVKTDAIPGRLNQAMLASMRPGLFYGQCSEICGSNHSFMPIVLEFIYFQDFEVWASYLYIVSL.

At 1-14 (MATPAQLGLQNATS) the chain is on the mitochondrial intermembrane side. The helical transmembrane segment at 15–45 (PIMEELIAFHDHALMIIFLISSLVLYIISLM) threads the bilayer. Residues 46 to 59 (LTTKLTHTSTMNAQ) lie on the Mitochondrial matrix side of the membrane. The helical transmembrane segment at 60–87 (EIEMIWTILPAIILIMIALPSLRILYMT) threads the bilayer. At 88–231 (DEFNKPYLTL…WASYLYIVSL (144 aa)) the chain is on the mitochondrial intermembrane side. The Cu cation site is built by H161, C196, E198, C200, H204, and M207. E198 is a Mg(2+) binding site.

Belongs to the cytochrome c oxidase subunit 2 family. As to quaternary structure, component of the cytochrome c oxidase (complex IV, CIV), a multisubunit enzyme composed of 14 subunits. The complex is composed of a catalytic core of 3 subunits MT-CO1, MT-CO2 and MT-CO3, encoded in the mitochondrial DNA, and 11 supernumerary subunits COX4I, COX5A, COX5B, COX6A, COX6B, COX6C, COX7A, COX7B, COX7C, COX8 and NDUFA4, which are encoded in the nuclear genome. The complex exists as a monomer or a dimer and forms supercomplexes (SCs) in the inner mitochondrial membrane with NADH-ubiquinone oxidoreductase (complex I, CI) and ubiquinol-cytochrome c oxidoreductase (cytochrome b-c1 complex, complex III, CIII), resulting in different assemblies (supercomplex SCI(1)III(2)IV(1) and megacomplex MCI(2)III(2)IV(2)). Found in a complex with TMEM177, COA6, COX18, COX20, SCO1 and SCO2. Interacts with TMEM177 in a COX20-dependent manner. Interacts with COX20. Interacts with COX16. The cofactor is Cu cation.

Its subcellular location is the mitochondrion inner membrane. It carries out the reaction 4 Fe(II)-[cytochrome c] + O2 + 8 H(+)(in) = 4 Fe(III)-[cytochrome c] + 2 H2O + 4 H(+)(out). Component of the cytochrome c oxidase, the last enzyme in the mitochondrial electron transport chain which drives oxidative phosphorylation. The respiratory chain contains 3 multisubunit complexes succinate dehydrogenase (complex II, CII), ubiquinol-cytochrome c oxidoreductase (cytochrome b-c1 complex, complex III, CIII) and cytochrome c oxidase (complex IV, CIV), that cooperate to transfer electrons derived from NADH and succinate to molecular oxygen, creating an electrochemical gradient over the inner membrane that drives transmembrane transport and the ATP synthase. Cytochrome c oxidase is the component of the respiratory chain that catalyzes the reduction of oxygen to water. Electrons originating from reduced cytochrome c in the intermembrane space (IMS) are transferred via the dinuclear copper A center (CU(A)) of subunit 2 and heme A of subunit 1 to the active site in subunit 1, a binuclear center (BNC) formed by heme A3 and copper B (CU(B)). The BNC reduces molecular oxygen to 2 water molecules using 4 electrons from cytochrome c in the IMS and 4 protons from the mitochondrial matrix. The protein is Cytochrome c oxidase subunit 2 (MT-CO2) of Aotus nigriceps (Black-headed night monkey).